Consider the following 577-residue polypeptide: Putative pseudouridine synthase B0024.11 (577 aa).

Asp188 (nucleophile) is an active-site residue. The TRUD domain occupies 265 to 472 (GFINYFGTQR…GESSRCLFVE (208 aa)). The segment covering 538-565 (KAMRDASFKTRGDDEKTEENVLEEKGSD) has biased composition (basic and acidic residues). Residues 538-577 (KAMRDASFKTRGDDEKTEENVLEEKGSDDANELNLVSEDQ) form a disordered region.

Belongs to the pseudouridine synthase TruD family.

The enzyme catalyses a uridine in tRNA = a pseudouridine in tRNA. In Caenorhabditis elegans, this protein is Putative pseudouridine synthase B0024.11.